We begin with the raw amino-acid sequence, 462 residues long: Integrator complex subunit 12 (462 aa).

The segment at Gly42–Pro129 is disordered. The segment covering Ile59 to Val86 has biased composition (polar residues). Lys68 is covalently cross-linked (Glycyl lysine isopeptide (Lys-Gly) (interchain with G-Cter in SUMO2)). A compositionally biased stretch (basic and acidic residues) spans Thr88–Glu124. Residue Ser128 is modified to Phosphoserine. The segment at Gly159 to Gln215 adopts a PHD-type zinc-finger fold. Residue Lys254 forms a Glycyl lysine isopeptide (Lys-Gly) (interchain with G-Cter in SUMO2) linkage. Polar residues predominate over residues Ser301–Gln328. A disordered region spans residues Ser301–Lys462. Composition is skewed to low complexity over residues Lys347–Val358 and Gly396–Ser437. A compositionally biased stretch (basic residues) spans Gln449–Lys462.

The protein belongs to the Integrator subunit 12 family. As to quaternary structure, component of the Integrator complex, composed of core subunits INTS1, INTS2, INTS3, INTS4, INTS5, INTS6, INTS7, INTS8, INTS9/RC74, INTS10, INTS11/CPSF3L, INTS12, INTS13, INTS14 and INTS15. The core complex associates with protein phosphatase 2A subunits PPP2CA and PPP2R1A, to form the Integrator-PP2A (INTAC) complex. Dephosphorylated at Ser-128 by the PNUTS-PP1 complex, promoting RNA polymerase II transcription pause-release.

The protein resides in the nucleus. Component of the integrator complex, a multiprotein complex that terminates RNA polymerase II (Pol II) transcription in the promoter-proximal region of genes. The integrator complex provides a quality checkpoint during transcription elongation by driving premature transcription termination of transcripts that are unfavorably configured for transcriptional elongation: the complex terminates transcription by (1) catalyzing dephosphorylation of the C-terminal domain (CTD) of Pol II subunit POLR2A/RPB1 and SUPT5H/SPT5, (2) degrading the exiting nascent RNA transcript via endonuclease activity and (3) promoting the release of Pol II from bound DNA. The integrator complex is also involved in terminating the synthesis of non-coding Pol II transcripts, such as enhancer RNAs (eRNAs), small nuclear RNAs (snRNAs), telomerase RNAs and long non-coding RNAs (lncRNAs). Mediates recruitment of cytoplasmic dynein to the nuclear envelope, probably as component of the integrator complex. This Macaca fascicularis (Crab-eating macaque) protein is Integrator complex subunit 12 (INTS12).